An 89-amino-acid chain; its full sequence is Ragulator complex protein LAMTOR5 homolog (89 aa).

The protein belongs to the LAMTOR5 family. In terms of assembly, part of the Ragulator complex.

The protein localises to the cytoplasm. It localises to the lysosome. Functionally, regulator of the TOR pathway, a signaling cascade that promotes cell growth in response to growth factors, energy levels, and amino acids. As part of the Ragulator complex, may activate the TOR signaling cascade in response to amino acids. This Dictyostelium discoideum (Social amoeba) protein is Ragulator complex protein LAMTOR5 homolog.